The sequence spans 37 residues: Large ribosomal subunit protein bL36 (37 aa).

It belongs to the bacterial ribosomal protein bL36 family.

This chain is Large ribosomal subunit protein bL36, found in Campylobacter jejuni subsp. jejuni serotype O:6 (strain 81116 / NCTC 11828).